Reading from the N-terminus, the 349-residue chain is Anthranilate phosphoribosyltransferase (349 aa).

5-phospho-alpha-D-ribose 1-diphosphate is bound by residues Gly87, 90 to 91 (GD), Thr95, 97 to 100 (NIST), 115 to 123 (KHGNRSVSS), and Ser127. Anthranilate is bound at residue Gly87. Residue Ser99 coordinates Mg(2+). Asn118 is an anthranilate binding site. Arg173 provides a ligand contact to anthranilate. Mg(2+) contacts are provided by Asp231 and Glu232.

It belongs to the anthranilate phosphoribosyltransferase family. In terms of assembly, homodimer. Requires Mg(2+) as cofactor.

The enzyme catalyses N-(5-phospho-beta-D-ribosyl)anthranilate + diphosphate = 5-phospho-alpha-D-ribose 1-diphosphate + anthranilate. Its pathway is amino-acid biosynthesis; L-tryptophan biosynthesis; L-tryptophan from chorismate: step 2/5. Catalyzes the transfer of the phosphoribosyl group of 5-phosphorylribose-1-pyrophosphate (PRPP) to anthranilate to yield N-(5'-phosphoribosyl)-anthranilate (PRA). The protein is Anthranilate phosphoribosyltransferase of Shewanella loihica (strain ATCC BAA-1088 / PV-4).